The chain runs to 165 residues: Endoribonuclease YbeY (165 aa).

Zn(2+)-binding residues include His-130, His-134, and His-140.

The protein belongs to the endoribonuclease YbeY family. Zn(2+) is required as a cofactor.

It is found in the cytoplasm. Functionally, single strand-specific metallo-endoribonuclease involved in late-stage 70S ribosome quality control and in maturation of the 3' terminus of the 16S rRNA. This is Endoribonuclease YbeY from Streptococcus agalactiae serotype Ia (strain ATCC 27591 / A909 / CDC SS700).